A 234-amino-acid polypeptide reads, in one-letter code: MNQASDEKALVVLSGGQDSTTCLYWALRRFGAGKVEAVTFDYGQRHRVELDCARKIAALAGVRQTVLPIDTFAAIGGNALTDASIAPEEGVRDDDALPNTFVPGRNLVFLTFAAAFAYTRGARHLVTGVAQTDYSGYPDCRENTLKALEVALRLGMDSRVELHTPLMYLSKAETVTLAQQVGALEALAWSHTCYNGEVPPCGHCASCELRAKGFAEAGVPDPLVERCQAEAQGL.

13–23 (LSGGQDSTTCL) is an ATP binding site. Positions 193, 201, 204, and 207 each coordinate Zn(2+).

It belongs to the QueC family. Zn(2+) serves as cofactor.

The catalysed reaction is 7-carboxy-7-deazaguanine + NH4(+) + ATP = 7-cyano-7-deazaguanine + ADP + phosphate + H2O + H(+). It participates in purine metabolism; 7-cyano-7-deazaguanine biosynthesis. Its function is as follows. Catalyzes the ATP-dependent conversion of 7-carboxy-7-deazaguanine (CDG) to 7-cyano-7-deazaguanine (preQ(0)). The sequence is that of 7-cyano-7-deazaguanine synthase from Chromobacterium violaceum (strain ATCC 12472 / DSM 30191 / JCM 1249 / CCUG 213 / NBRC 12614 / NCIMB 9131 / NCTC 9757 / MK).